The sequence spans 428 residues: Glutamyl-tRNA reductase (428 aa).

Residues 55-58 (TCNR), Ser114, 119-121 (ETQ), and Gln125 contribute to the substrate site. Residue Cys56 is the Nucleophile of the active site. An NADP(+)-binding site is contributed by 194 to 199 (GAGEMI).

The protein belongs to the glutamyl-tRNA reductase family. In terms of assembly, homodimer.

The catalysed reaction is (S)-4-amino-5-oxopentanoate + tRNA(Glu) + NADP(+) = L-glutamyl-tRNA(Glu) + NADPH + H(+). The protein operates within porphyrin-containing compound metabolism; protoporphyrin-IX biosynthesis; 5-aminolevulinate from L-glutamyl-tRNA(Glu): step 1/2. Its function is as follows. Catalyzes the NADPH-dependent reduction of glutamyl-tRNA(Glu) to glutamate 1-semialdehyde (GSA). The protein is Glutamyl-tRNA reductase of Paraburkholderia phytofirmans (strain DSM 17436 / LMG 22146 / PsJN) (Burkholderia phytofirmans).